The chain runs to 250 residues: ATP synthase subunit a (250 aa).

Transmembrane regions (helical) follow at residues 26–46, 84–104, 114–134, 143–163, 193–213, and 216–236; these read FTNASLFMVATVGVAAGFLYL, FFPMVFSLFMFILTANLLGMF, IIVTFALAVFVIGTVILYGFY, LFVPHGVPGALLPLVVSIEVI, FVASLSAFGALGIGGAILPLI, and VALTGLEFLVAFLQAYVFAVL.

It belongs to the ATPase A chain family. In terms of assembly, F-type ATPases have 2 components, CF(1) - the catalytic core - and CF(0) - the membrane proton channel. CF(1) has five subunits: alpha(3), beta(3), gamma(1), delta(1), epsilon(1). CF(0) has three main subunits: a(1), b(2) and c(9-12). The alpha and beta chains form an alternating ring which encloses part of the gamma chain. CF(1) is attached to CF(0) by a central stalk formed by the gamma and epsilon chains, while a peripheral stalk is formed by the delta and b chains.

It is found in the cell inner membrane. Its function is as follows. Key component of the proton channel; it plays a direct role in the translocation of protons across the membrane. This chain is ATP synthase subunit a, found in Sinorhizobium fredii (strain NBRC 101917 / NGR234).